A 383-amino-acid chain; its full sequence is Omega-6 fatty acid desaturase, endoplasmic reticulum isozyme 2 (383 aa).

3 consecutive transmembrane segments (helical) span residues 61–81, 85–105, and 117–137; these read TIAF…PGPL, GMAI…VIAH, and LLDD…YFSW. The Histidine box-1 signature appears at 105–109; that stretch reads HECGH. Residues 141–145 carry the Histidine box-2 motif; the sequence is HRRHH. Transmembrane regions (helical) follow at residues 179-199, 225-245, and 249-269; these read VLTL…LNVS, IYIS…LAMA, and AWVV…LVLI. Positions 315 to 319 match the Histidine box-3 motif; it reads HVAHH.

It belongs to the fatty acid desaturase type 1 family.

It localises to the endoplasmic reticulum membrane. It participates in lipid metabolism; polyunsaturated fatty acid biosynthesis. ER (microsomal) omega-6 fatty acid desaturase introduces the second double bond in the biosynthesis of 18:3 fatty acids, important constituents of plant membranes. It is thought to use cytochrome b5 as an electron donor and to act on fatty acids esterified to phosphatidylcholine and, possibly, other phospholipids. This Glycine max (Soybean) protein is Omega-6 fatty acid desaturase, endoplasmic reticulum isozyme 2 (FAD2-2).